We begin with the raw amino-acid sequence, 187 residues long: UPF0200 protein MA_4660 (187 aa).

9-16 (GMPASGKS) provides a ligand contact to ATP.

It belongs to the UPF0200 family.

In Methanosarcina acetivorans (strain ATCC 35395 / DSM 2834 / JCM 12185 / C2A), this protein is UPF0200 protein MA_4660.